Consider the following 565-residue polypeptide: Arginine--tRNA ligase (565 aa).

The 'HIGH' region signature appears at 120–130 (PNIAKPFHVGH).

This sequence belongs to the class-I aminoacyl-tRNA synthetase family. Monomer.

It localises to the cytoplasm. It catalyses the reaction tRNA(Arg) + L-arginine + ATP = L-arginyl-tRNA(Arg) + AMP + diphosphate. The protein is Arginine--tRNA ligase of Clostridium perfringens (strain 13 / Type A).